A 312-amino-acid polypeptide reads, in one-letter code: Tetraspanin-17 (312 aa).

The next 4 helical transmembrane spans lie at 17 to 37, 64 to 84, 89 to 109, and 274 to 294; these read IFSI…LWML, VSLV…CGAV, FLLL…VAMG, and IWIF…GICL.

Belongs to the tetraspanin (TM4SF) family. As to expression, expressed in dopaminergic neurons, head muscles, vulva and spermatheca.

Its subcellular location is the cell membrane. It localises to the cell projection. It is found in the dendrite. The protein resides in the axon. Functionally, protects dopaminergic neurons against oxidative stress-induced neurodegeneration. May act partly via dopamine receptor dop-2 to negatively regulate dopamine reuptake transporter dat-1 activity. Also plays a role in modulating behaviors linked to dopamine signaling. Confers protection against oxidative stress in the whole body. The sequence is that of Tetraspanin-17 from Caenorhabditis elegans.